The chain runs to 512 residues: ETS translocation variant 3 (512 aa).

The ETS DNA-binding region spans 35–116 (IQLWHFILEL…KGKRFTYKFN (82 aa)). The tract at residues 138–196 (QSAPPVPTASSRFHFPPLDTHSPTSDVQPGRFSASSLTASGQESSNGTDRKAELSXLED) is disordered. Phosphoserine occurs at positions 139, 159, and 315. A compositionally biased stretch (polar residues) spans 158–184 (HSPTSDVQPGRFSASSLTASGQESSNG). Residues 341 to 512 (QFSIKLQPPP…QGLATAAADA (172 aa)) are disordered. Over residues 380 to 406 (IKVEPASEKDAESLRQSAREKEEHTXE) the composition is skewed to basic and acidic residues. Residue Lys-381 forms a Glycyl lysine isopeptide (Lys-Gly) (interchain with G-Cter in SUMO2) linkage. The residue at position 388 (Lys-388) is an N6-acetyllysine; alternate. Lys-388 participates in a covalent cross-link: Glycyl lysine isopeptide (Lys-Gly) (interchain with G-Cter in SUMO2); alternate. Acidic residues predominate over residues 443-452 (EPLEVTEDIE). 2 stretches are compositionally biased toward basic and acidic residues: residues 453 to 468 (DRPGKEPSAPEKKEDA) and 479 to 491 (RWNDDPEARELSK).

It belongs to the ETS family.

The protein localises to the nucleus. Functionally, transcriptional repressor that contribute to growth arrest during terminal macrophage differentiation by repressing target genes involved in Ras-dependent proliferation. Represses MMP1 promoter activity. This chain is ETS translocation variant 3 (ETV3), found in Ateles geoffroyi (Black-handed spider monkey).